A 259-amino-acid polypeptide reads, in one-letter code: Ribosomal RNA large subunit methyltransferase E (259 aa).

S-adenosyl-L-methionine contacts are provided by glycine 58, tryptophan 60, aspartate 78, aspartate 96, and aspartate 120. Lysine 160 (proton acceptor) is an active-site residue.

This sequence belongs to the class I-like SAM-binding methyltransferase superfamily. RNA methyltransferase RlmE family.

The protein resides in the cytoplasm. The catalysed reaction is uridine(2552) in 23S rRNA + S-adenosyl-L-methionine = 2'-O-methyluridine(2552) in 23S rRNA + S-adenosyl-L-homocysteine + H(+). Its function is as follows. Specifically methylates the uridine in position 2552 of 23S rRNA at the 2'-O position of the ribose in the fully assembled 50S ribosomal subunit. This Methanococcus vannielii (strain ATCC 35089 / DSM 1224 / JCM 13029 / OCM 148 / SB) protein is Ribosomal RNA large subunit methyltransferase E.